Consider the following 303-residue polypeptide: Porphobilinogen deaminase (303 aa).

Cysteine 235 bears the S-(dipyrrolylmethanemethyl)cysteine mark.

It belongs to the HMBS family. In terms of assembly, monomer. Dipyrromethane is required as a cofactor.

The enzyme catalyses 4 porphobilinogen + H2O = hydroxymethylbilane + 4 NH4(+). Its pathway is porphyrin-containing compound metabolism; protoporphyrin-IX biosynthesis; coproporphyrinogen-III from 5-aminolevulinate: step 2/4. Functionally, tetrapolymerization of the monopyrrole PBG into the hydroxymethylbilane pre-uroporphyrinogen in several discrete steps. The protein is Porphobilinogen deaminase of Campylobacter fetus subsp. fetus (strain 82-40).